Here is a 102-residue protein sequence, read N- to C-terminus: uncharacterized protein (102 aa).

Residues 1-41 form a disordered region; the sequence is MAAPRQIAFYGKGGTGKPKRKPEPVTASKEDRCLGSPSKNK.

The protein to the N-terminal of nitrogenase iron protein (NifH). Has lost the ATP-binding site.

This protein is either not expressed, expressed at low levels or rapidly degraded. This is an uncharacterized protein from Rhizobium meliloti (Ensifer meliloti).